The sequence spans 88 residues: Small ribosomal subunit protein bS20 (88 aa).

The interval 1 to 27 (MANIKSQIKRNKTNEKARLRNKAVKSS) is disordered.

Belongs to the bacterial ribosomal protein bS20 family.

Functionally, binds directly to 16S ribosomal RNA. This Streptomyces griseus subsp. griseus (strain JCM 4626 / CBS 651.72 / NBRC 13350 / KCC S-0626 / ISP 5235) protein is Small ribosomal subunit protein bS20.